Consider the following 291-residue polypeptide: 4-diphosphocytidyl-2-C-methyl-D-erythritol kinase (291 aa).

The active site involves K11. 97–107 contributes to the ATP binding site; the sequence is PVAAGIGGGSS. D139 is an active-site residue.

The protein belongs to the GHMP kinase family. IspE subfamily.

It carries out the reaction 4-CDP-2-C-methyl-D-erythritol + ATP = 4-CDP-2-C-methyl-D-erythritol 2-phosphate + ADP + H(+). It participates in isoprenoid biosynthesis; isopentenyl diphosphate biosynthesis via DXP pathway; isopentenyl diphosphate from 1-deoxy-D-xylulose 5-phosphate: step 3/6. Functionally, catalyzes the phosphorylation of the position 2 hydroxy group of 4-diphosphocytidyl-2C-methyl-D-erythritol. The protein is 4-diphosphocytidyl-2-C-methyl-D-erythritol kinase of Methylorubrum extorquens (strain CM4 / NCIMB 13688) (Methylobacterium extorquens).